Consider the following 284-residue polypeptide: MTAKLIDGKAIAASLRQQIAKRVAERSQQGLRTPGLAVILVGSDPASQVYVSHKRKDCEEVGFISQAYDLPAETTQTALTDLIDRLNEDAAVDGILLQLPLPAHLDASLLLERIRPDKDVDGFHPYNVGRLAQRIPLLRPCTPKGIITLLESTGVDLYGLDAVVVGASNIVGRPMAMELLLAGCTVTVTHRFTKDLAGHVGRADLVVVAAGKPGLIKGEWIKPGAIVIDVGINRQDDGKLVGDVVYETALPRAGWITPVPGGVGPMTRACLLENTLYAAETLHD.

Residues 166 to 168 (GAS) and Ile-232 each bind NADP(+).

Belongs to the tetrahydrofolate dehydrogenase/cyclohydrolase family. In terms of assembly, homodimer.

The catalysed reaction is (6R)-5,10-methylene-5,6,7,8-tetrahydrofolate + NADP(+) = (6R)-5,10-methenyltetrahydrofolate + NADPH. The enzyme catalyses (6R)-5,10-methenyltetrahydrofolate + H2O = (6R)-10-formyltetrahydrofolate + H(+). The protein operates within one-carbon metabolism; tetrahydrofolate interconversion. In terms of biological role, catalyzes the oxidation of 5,10-methylenetetrahydrofolate to 5,10-methenyltetrahydrofolate and then the hydrolysis of 5,10-methenyltetrahydrofolate to 10-formyltetrahydrofolate. The protein is Bifunctional protein FolD 1 of Pseudomonas savastanoi pv. phaseolicola (strain 1448A / Race 6) (Pseudomonas syringae pv. phaseolicola (strain 1448A / Race 6)).